The chain runs to 256 residues: Thiazole synthase (256 aa).

Catalysis depends on K95, which acts as the Schiff-base intermediate with DXP. Residues G156, 182-183, and 204-205 each bind 1-deoxy-D-xylulose 5-phosphate; these read AG and NT.

This sequence belongs to the ThiG family. In terms of assembly, homotetramer. Forms heterodimers with either ThiH or ThiS.

It localises to the cytoplasm. The catalysed reaction is [ThiS sulfur-carrier protein]-C-terminal-Gly-aminoethanethioate + 2-iminoacetate + 1-deoxy-D-xylulose 5-phosphate = [ThiS sulfur-carrier protein]-C-terminal Gly-Gly + 2-[(2R,5Z)-2-carboxy-4-methylthiazol-5(2H)-ylidene]ethyl phosphate + 2 H2O + H(+). Its pathway is cofactor biosynthesis; thiamine diphosphate biosynthesis. In terms of biological role, catalyzes the rearrangement of 1-deoxy-D-xylulose 5-phosphate (DXP) to produce the thiazole phosphate moiety of thiamine. Sulfur is provided by the thiocarboxylate moiety of the carrier protein ThiS. In vitro, sulfur can be provided by H(2)S. This is Thiazole synthase from Enterobacter sp. (strain 638).